We begin with the raw amino-acid sequence, 445 residues long: Na(+)-translocating NADH-quinone reductase subunit A (445 aa).

Belongs to the NqrA family. In terms of assembly, composed of six subunits; NqrA, NqrB, NqrC, NqrD, NqrE and NqrF.

The enzyme catalyses a ubiquinone + n Na(+)(in) + NADH + H(+) = a ubiquinol + n Na(+)(out) + NAD(+). In terms of biological role, NQR complex catalyzes the reduction of ubiquinone-1 to ubiquinol by two successive reactions, coupled with the transport of Na(+) ions from the cytoplasm to the periplasm. NqrA to NqrE are probably involved in the second step, the conversion of ubisemiquinone to ubiquinol. The polypeptide is Na(+)-translocating NADH-quinone reductase subunit A (Pseudomonas aeruginosa (strain UCBPP-PA14)).